The following is a 96-amino-acid chain: Small, acid-soluble spore protein gamma-type (96 aa).

The span at Met-1–Ala-15 shows a compositional bias: polar residues. Positions Met-1–Gln-96 are disordered. Positions Gln-16 to Gln-27 are enriched in low complexity. Over residues Gly-28–Thr-41 the composition is skewed to polar residues. Repeats lie at residues Gly-28–Gln-52 and Gly-61–Ser-87. Composition is skewed to low complexity over residues Asn-42–Asn-57 and Asn-76–Gln-86.

It belongs to the gamma-type SASP family.

Its function is as follows. SASP are proteins degraded in the first minutes of spore germination and provide amino acids for both new protein synthesis and metabolism. These proteins may be involved in dormant spore's high resistance to UV light. In Laceyella sacchari (Thermoactinomyces thalpophilus), this protein is Small, acid-soluble spore protein gamma-type.